The chain runs to 226 residues: uncharacterized protein (226 aa).

The signal sequence occupies residues 1 to 18; that stretch reads MRRIGLCISLLVTVLVMS.

This is an uncharacterized protein from Bacillus subtilis (strain 168).